Here is an 80-residue protein sequence, read N- to C-terminus: Large ribosomal subunit protein uL29 (80 aa).

The protein belongs to the universal ribosomal protein uL29 family.

The polypeptide is Large ribosomal subunit protein uL29 (Mycobacterium marinum (strain ATCC BAA-535 / M)).